Consider the following 343-residue polypeptide: S-adenosylmethionine:tRNA ribosyltransferase-isomerase (343 aa).

The protein belongs to the QueA family. Monomer.

The protein resides in the cytoplasm. It catalyses the reaction 7-aminomethyl-7-carbaguanosine(34) in tRNA + S-adenosyl-L-methionine = epoxyqueuosine(34) in tRNA + adenine + L-methionine + 2 H(+). Its pathway is tRNA modification; tRNA-queuosine biosynthesis. Transfers and isomerizes the ribose moiety from AdoMet to the 7-aminomethyl group of 7-deazaguanine (preQ1-tRNA) to give epoxyqueuosine (oQ-tRNA). In Coxiella burnetii (strain CbuG_Q212) (Coxiella burnetii (strain Q212)), this protein is S-adenosylmethionine:tRNA ribosyltransferase-isomerase.